The chain runs to 1235 residues: Myosin-1 (1235 aa).

The tract at residues methionine 1–aspartate 34 is disordered. Over residues aspartate 9–glycine 19 the composition is skewed to basic and acidic residues. The Myosin motor domain maps to isoleucine 41–aspartate 715. Glycine 134–threonine 141 provides a ligand contact to ATP. The segment at serine 405–alanine 487 is actin-binding. IQ domains are found at residues histidine 719–alanine 739 and alanine 740–lysine 765. Residues arginine 773–proline 962 enclose the TH1 domain. 2 disordered regions span residues tyrosine 949–proline 1076 and alanine 1135–tryptophan 1235. Positions lysine 982–alanine 1046 are enriched in low complexity. A compositionally biased stretch (polar residues) spans proline 1050–valine 1062. Over residues arginine 1063–alanine 1073 the composition is skewed to pro residues. The region spanning lysine 1075–proline 1134 is the SH3 domain. Residues alanine 1135 to alanine 1150 are compositionally biased toward pro residues. A compositionally biased stretch (polar residues) spans serine 1180–isoleucine 1210.

Belongs to the TRAFAC class myosin-kinesin ATPase superfamily. Myosin family.

It localises to the cytoplasm. The protein localises to the cytoskeleton. Its subcellular location is the actin patch. In terms of biological role, type-I myosin implicated in the organization of the actin cytoskeleton. Required for proper actin cytoskeleton polarization. At the cell cortex, assembles in patch-like structures together with proteins from the actin-polymerizing machinery and promotes actin assembly. Functions as actin nucleation-promoting factor (NPF) for the Arp2/3 complex. The polypeptide is Myosin-1 (myo-1) (Neurospora crassa (strain ATCC 24698 / 74-OR23-1A / CBS 708.71 / DSM 1257 / FGSC 987)).